We begin with the raw amino-acid sequence, 49 residues long: Small ribosomal subunit protein uS14B (49 aa).

This sequence belongs to the universal ribosomal protein uS14 family. Zinc-binding uS14 subfamily. Part of the 30S ribosomal subunit.

Its function is as follows. Binds 16S rRNA, required for the assembly of 30S particles. In Natronomonas pharaonis (strain ATCC 35678 / DSM 2160 / CIP 103997 / JCM 8858 / NBRC 14720 / NCIMB 2260 / Gabara) (Halobacterium pharaonis), this protein is Small ribosomal subunit protein uS14B.